The primary structure comprises 294 residues: Kynurenine formamidase (294 aa).

Residues 1–14 show a composition bias toward basic and acidic residues; sequence MSRWKDMNKDELER. The interval 1–20 is disordered; it reads MSRWKDMNKDELERQFSPSQ. The short motif at 84–88 is the HGGXW element; it reads HGGYW. S153 (nucleophile) is an active-site residue. Residues D236 and H269 contribute to the active site.

The protein belongs to the kynurenine formamidase family. In terms of assembly, homodimer.

It is found in the cytoplasm. It localises to the cytosol. Its subcellular location is the nucleus. The catalysed reaction is N-formyl-L-kynurenine + H2O = L-kynurenine + formate + H(+). It functions in the pathway amino-acid degradation; L-tryptophan degradation via kynurenine pathway; L-kynurenine from L-tryptophan: step 2/2. Catalyzes the hydrolysis of N-formyl-L-kynurenine to L-kynurenine, the second step in the kynurenine pathway of tryptophan degradation. Kynurenine may be further oxidized to nicotinic acid, NAD(H) and NADP(H). Required for elimination of toxic metabolites. This Salmo salar (Atlantic salmon) protein is Kynurenine formamidase (afmid).